A 153-amino-acid polypeptide reads, in one-letter code: Inner membrane protein YjiG (153 aa).

Residues M1–N31 lie on the Periplasmic side of the membrane. A helical membrane pass occupies residues V32–G52. Topologically, residues H53–A68 are cytoplasmic. A run of 2 helical transmembrane segments spans residues A69–L89 and A90–M110. Residues G111–P132 lie on the Cytoplasmic side of the membrane. The helical transmembrane segment at H133 to V153 threads the bilayer.

It belongs to the SpmB family.

It localises to the cell inner membrane. This is Inner membrane protein YjiG (yjiG) from Escherichia coli O157:H7.